The following is a 257-amino-acid chain: Chymotrypsin-like protease VLCTLP (257 aa).

Residues 1–18 (MVLIRVLANLLLLQLSYA) form the signal peptide. The propeptide occupies 19–24 (QKSSEL). The Peptidase S1 domain occupies 25-248 (VVGGDECNIN…YSDWIQSIIA (224 aa)). 6 disulfides stabilise this stretch: cysteine 31-cysteine 162, cysteine 49-cysteine 65, cysteine 97-cysteine 255, cysteine 141-cysteine 209, cysteine 173-cysteine 188, and cysteine 199-cysteine 224. A glycan (N-linked (GlcNAc...) asparagine) is linked at asparagine 44. Histidine 64 serves as the catalytic Charge relay system. Asparagine 100 is a glycosylation site (N-linked (GlcNAc...) asparagine). Aspartate 109 serves as the catalytic Charge relay system. N-linked (GlcNAc...) asparagine glycans are attached at residues asparagine 116 and asparagine 153. The active-site Charge relay system is serine 203. A glycan (N-linked (GlcNAc...) asparagine) is linked at asparagine 250.

The protein belongs to the peptidase S1 family. Snake venom subfamily. Monomer. Post-translationally, partial deglycosylation has not effect on enzyme activity. In terms of tissue distribution, expressed by the venom gland.

The protein localises to the secreted. Inhibited by PMSF. In terms of biological role, snake venom serine protease with tyrosine-specific chymotrypsin-like activity. Hydrolyzes the N-acetyl-L-tyrosine ethyl ester (ATEE). Has weak fibrinogenolytic activity. Weakly hydrolyzes azocasein, Aalpha-chain (FGA) and more slowly Bbeta-chain (FGB) of fibrinogen. Optimal substrates are angiotensins I and II (AGT). The chain is Chymotrypsin-like protease VLCTLP from Macrovipera lebetinus (Levantine viper).